The chain runs to 363 residues: Small ribosomal subunit biogenesis GTPase RsgA (363 aa).

The CP-type G domain maps to 112–268 (HQQVIAANID…LIDTPGMREL (157 aa)). GTP is bound by residues 157–160 (TKAD) and 210–218 (GSSGAGKST). Zn(2+)-binding residues include Cys291, Cys296, His298, and Cys304. The tract at residues 340-363 (RVAQNNRGKGSGKRPASIDRPGRR) is disordered.

This sequence belongs to the TRAFAC class YlqF/YawG GTPase family. RsgA subfamily. Monomer. Associates with 30S ribosomal subunit, binds 16S rRNA. It depends on Zn(2+) as a cofactor.

The protein resides in the cytoplasm. One of several proteins that assist in the late maturation steps of the functional core of the 30S ribosomal subunit. Helps release RbfA from mature subunits. May play a role in the assembly of ribosomal proteins into the subunit. Circularly permuted GTPase that catalyzes slow GTP hydrolysis, GTPase activity is stimulated by the 30S ribosomal subunit. The sequence is that of Small ribosomal subunit biogenesis GTPase RsgA from Xanthomonas oryzae pv. oryzae (strain PXO99A).